The sequence spans 163 residues: SsrA-binding protein (163 aa).

Belongs to the SmpB family.

Its subcellular location is the cytoplasm. In terms of biological role, required for rescue of stalled ribosomes mediated by trans-translation. Binds to transfer-messenger RNA (tmRNA), required for stable association of tmRNA with ribosomes. tmRNA and SmpB together mimic tRNA shape, replacing the anticodon stem-loop with SmpB. tmRNA is encoded by the ssrA gene; the 2 termini fold to resemble tRNA(Ala) and it encodes a 'tag peptide', a short internal open reading frame. During trans-translation Ala-aminoacylated tmRNA acts like a tRNA, entering the A-site of stalled ribosomes, displacing the stalled mRNA. The ribosome then switches to translate the ORF on the tmRNA; the nascent peptide is terminated with the 'tag peptide' encoded by the tmRNA and targeted for degradation. The ribosome is freed to recommence translation, which seems to be the essential function of trans-translation. The sequence is that of SsrA-binding protein from Shewanella putrefaciens (strain CN-32 / ATCC BAA-453).